Reading from the N-terminus, the 116-residue chain is Iron-sulfur cluster insertion protein ErpA (116 aa).

Iron-sulfur cluster contacts are provided by Cys44, Cys108, and Cys110.

The protein belongs to the HesB/IscA family. Homodimer. Iron-sulfur cluster serves as cofactor.

In terms of biological role, required for insertion of 4Fe-4S clusters for at least IspG. The sequence is that of Iron-sulfur cluster insertion protein ErpA from Shewanella piezotolerans (strain WP3 / JCM 13877).